Here is a 240-residue protein sequence, read N- to C-terminus: Uridylate kinase (240 aa).

An ATP-binding site is contributed by 12-15 (KLSG). An involved in allosteric activation by GTP region spans residues 20–25 (GEQGNG). Glycine 54 is a binding site for UMP. ATP is bound by residues glycine 55 and arginine 59. Residues aspartate 74 and 135–142 (TGNPYFST) each bind UMP. Asparagine 163, tyrosine 169, and aspartate 172 together coordinate ATP.

Belongs to the UMP kinase family. Homohexamer. Interacts with BrxC.

The protein resides in the cytoplasm. It catalyses the reaction UMP + ATP = UDP + ADP. The protein operates within pyrimidine metabolism; CTP biosynthesis via de novo pathway; UDP from UMP (UMPK route): step 1/1. Allosterically activated by GTP. Can also be activated by dGTP and 3'-anthraniloyl-2'-deoxyguanosine-5'-triphosphate (Ant-dGTP). Inhibited by UTP, 5-bromo-UTP and 5-iodo-UTP. Functionally, catalyzes the reversible phosphorylation of UMP to UDP, with ATP or dATP as the most efficient phosphate donors. Is also able to phosphorylate 5-fluoro-UMP and 6-aza-UMP. This is Uridylate kinase (pyrH) from Bacillus subtilis (strain 168).